Reading from the N-terminus, the 520-residue chain is Transactivator/viroplasmin protein (520 aa).

Disordered regions lie at residues 32-51 and 487-520; these read GSSQ…KEEA and QDAS…KQVD. Positions 40 to 51 are enriched in basic and acidic residues; the sequence is SLHRETPEKEEA.

The protein belongs to the caulimoviridae viroplasmin family.

The protein resides in the host cytoplasm. Functionally, enhances the ribosomal termination-reinitiation event leading to the translation of major open reading frames on the polycistronic viral RNAs. This Arabidopsis thaliana (Mouse-ear cress) protein is Transactivator/viroplasmin protein.